Here is a 605-residue protein sequence, read N- to C-terminus: Protein cueball (605 aa).

The N-terminal stretch at 1 to 31 (MAYIDQKHNTFWDDFAIALRDKIVFLNSTWG) is a signal peptide. N-linked (GlcNAc...) asparagine glycans are attached at residues asparagine 27, asparagine 64, and asparagine 85. Residues 32-486 (EIHASAHRFE…QCGPAPPVQG (455 aa)) lie on the Extracellular side of the membrane. LDL-receptor class B repeat units lie at residues 53–97 (EMIY…DPLN), 98–145 (RNLF…DICR), 146–190 (RQLY…DQLS), and 191–236 (DRIF…NEDA). N-linked (GlcNAc...) asparagine glycans are attached at residues asparagine 261 and asparagine 314. 2 consecutive EGF-like domains span residues 322–359 (EGDR…ARCE) and 394–431 (EYHK…ERCE). Disulfide bonds link cysteine 334-cysteine 347, cysteine 349-cysteine 358, cysteine 398-cysteine 408, cysteine 402-cysteine 419, and cysteine 421-cysteine 430. Residues asparagine 433 and asparagine 464 are each glycosylated (N-linked (GlcNAc...) asparagine). A helical membrane pass occupies residues 487–507 (PLIIVIVLGLVTTSGLVALTV). The Cytoplasmic segment spans residues 508-605 (HGVRLIYKPK…IHSMEDNLLS (98 aa)).

This sequence belongs to the cueball family.

It localises to the cell membrane. Functionally, has a role in spermatogenesis and oogenesis. This Drosophila grimshawi (Hawaiian fruit fly) protein is Protein cueball.